The chain runs to 643 residues: Phosphomethylpyrimidine synthase (643 aa).

Residues N248, M277, Y306, H342, 362-364 (SRG), 403-406 (DGLR), and E442 each bind substrate. H446 lines the Zn(2+) pocket. Residue Y469 participates in substrate binding. Residue H510 participates in Zn(2+) binding. 3 residues coordinate [4Fe-4S] cluster: C590, C593, and C598.

The protein belongs to the ThiC family. Homodimer. [4Fe-4S] cluster is required as a cofactor.

It carries out the reaction 5-amino-1-(5-phospho-beta-D-ribosyl)imidazole + S-adenosyl-L-methionine = 4-amino-2-methyl-5-(phosphooxymethyl)pyrimidine + CO + 5'-deoxyadenosine + formate + L-methionine + 3 H(+). Its pathway is cofactor biosynthesis; thiamine diphosphate biosynthesis. Its function is as follows. Catalyzes the synthesis of the hydroxymethylpyrimidine phosphate (HMP-P) moiety of thiamine from aminoimidazole ribotide (AIR) in a radical S-adenosyl-L-methionine (SAM)-dependent reaction. The chain is Phosphomethylpyrimidine synthase from Paraburkholderia phytofirmans (strain DSM 17436 / LMG 22146 / PsJN) (Burkholderia phytofirmans).